The sequence spans 272 residues: Glucosyl-3-phosphoglycerate/mannosyl-3-phosphoglycerate phosphatase (272 aa).

Asp8 (nucleophile) is an active-site residue. Asp8, Asp10, and Asp214 together coordinate Mg(2+).

It belongs to the HAD-like hydrolase superfamily. MPGP family. In terms of assembly, monomer. It depends on Co(2+) as a cofactor. Mg(2+) is required as a cofactor. The cofactor is Ni(2+).

The enzyme catalyses (2R)-2-O-(alpha-D-glucopyranosyl)-3-phospho-glycerate + H2O = (2R)-2-O-(alpha-D-glucopyranosyl)-glycerate + phosphate. It catalyses the reaction 2-O-(alpha-D-mannosyl)-3-phosphoglycerate + H2O = (2R)-2-O-(alpha-D-mannosyl)-glycerate + phosphate. Functionally, involved in the biosynthesis of glucosylglycerate. Catalyzes the dephosphorylation of glucosyl-3-phosphoglycerate (GPG) and mannosyl-3-phosphoglycerate (MPG) to glucosylglycerate (GG) and mannosylglycerate (MG), respectively. The sequence is that of Glucosyl-3-phosphoglycerate/mannosyl-3-phosphoglycerate phosphatase from Methanococcoides burtonii (strain DSM 6242 / NBRC 107633 / OCM 468 / ACE-M).